Consider the following 223-residue polypeptide: Phosphoribosylformylglycinamidine synthase subunit PurQ (223 aa).

Residues 4–223 (FAVVVFPGTN…FKGMVEWVRS (220 aa)) enclose the Glutamine amidotransferase type-1 domain. Cysteine 85 serves as the catalytic Nucleophile. Active-site residues include histidine 196 and glutamate 198.

Part of the FGAM synthase complex composed of 1 PurL, 1 PurQ and 2 PurS subunits.

Its subcellular location is the cytoplasm. The enzyme catalyses N(2)-formyl-N(1)-(5-phospho-beta-D-ribosyl)glycinamide + L-glutamine + ATP + H2O = 2-formamido-N(1)-(5-O-phospho-beta-D-ribosyl)acetamidine + L-glutamate + ADP + phosphate + H(+). It carries out the reaction L-glutamine + H2O = L-glutamate + NH4(+). Its pathway is purine metabolism; IMP biosynthesis via de novo pathway; 5-amino-1-(5-phospho-D-ribosyl)imidazole from N(2)-formyl-N(1)-(5-phospho-D-ribosyl)glycinamide: step 1/2. In terms of biological role, part of the phosphoribosylformylglycinamidine synthase complex involved in the purines biosynthetic pathway. Catalyzes the ATP-dependent conversion of formylglycinamide ribonucleotide (FGAR) and glutamine to yield formylglycinamidine ribonucleotide (FGAM) and glutamate. The FGAM synthase complex is composed of three subunits. PurQ produces an ammonia molecule by converting glutamine to glutamate. PurL transfers the ammonia molecule to FGAR to form FGAM in an ATP-dependent manner. PurS interacts with PurQ and PurL and is thought to assist in the transfer of the ammonia molecule from PurQ to PurL. The sequence is that of Phosphoribosylformylglycinamidine synthase subunit PurQ from Pyrococcus furiosus (strain ATCC 43587 / DSM 3638 / JCM 8422 / Vc1).